A 119-amino-acid chain; its full sequence is Large ribosomal subunit protein bL20 (119 aa).

It belongs to the bacterial ribosomal protein bL20 family.

Binds directly to 23S ribosomal RNA and is necessary for the in vitro assembly process of the 50S ribosomal subunit. It is not involved in the protein synthesizing functions of that subunit. This chain is Large ribosomal subunit protein bL20, found in Metamycoplasma arthritidis (strain 158L3-1) (Mycoplasma arthritidis).